The chain runs to 194 residues: Small ribosomal subunit protein uS4c (194 aa).

Positions 1-29 (RFKKIRRLGTLPGLTSKRPRSGSDLKNPL) are disordered. The S4 RNA-binding domain occupies 82–143 (MRLDNILFRL…KQRSKALIQN (62 aa)).

It belongs to the universal ribosomal protein uS4 family. Part of the 30S ribosomal subunit. Contacts protein S5. The interaction surface between S4 and S5 is involved in control of translational fidelity.

It localises to the plastid. It is found in the chloroplast. Functionally, one of the primary rRNA binding proteins, it binds directly to 16S rRNA where it nucleates assembly of the body of the 30S subunit. Its function is as follows. With S5 and S12 plays an important role in translational accuracy. The sequence is that of Small ribosomal subunit protein uS4c (rps4) from Furcraea foetida (Mauritius hemp).